Consider the following 179-residue polypeptide: Ribosome maturation factor RimM (179 aa).

In terms of domain architecture, PRC barrel spans 102-179; sequence DGEYYWYQLE…EMKVDWDADF (78 aa).

This sequence belongs to the RimM family. Binds ribosomal protein uS19.

The protein resides in the cytoplasm. In terms of biological role, an accessory protein needed during the final step in the assembly of 30S ribosomal subunit, possibly for assembly of the head region. Essential for efficient processing of 16S rRNA. May be needed both before and after RbfA during the maturation of 16S rRNA. It has affinity for free ribosomal 30S subunits but not for 70S ribosomes. The polypeptide is Ribosome maturation factor RimM (Pseudomonas savastanoi pv. phaseolicola (strain 1448A / Race 6) (Pseudomonas syringae pv. phaseolicola (strain 1448A / Race 6))).